Consider the following 182-residue polypeptide: Methionine-R-sulfoxide reductase B2, mitochondrial (182 aa).

The transit peptide at 1–20 (MARLLWLLRGLTLGTAPRRA) directs the protein to the mitochondrion. The MsrB domain occupies 51–180 (KSEWQKKLTP…NSVALKFKPR (130 aa)). Residues Cys-90, Cys-93, Cys-146, and Cys-149 each contribute to the Zn(2+) site. Residue Cys-169 is the Nucleophile of the active site.

The protein belongs to the MsrB Met sulfoxide reductase family. As to quaternary structure, interacts with DAOA; the interaction is direct. Requires Zn(2+) as cofactor. In terms of tissue distribution, ubiquitous. Detected in retina, ocular ciliary body, skeletal muscle, heart, colon, bone marrow, cerebellum, small intestine, fetal brain, fetal liver, kidney, spinal cord, lung, placenta and prostate.

It localises to the mitochondrion. The enzyme catalyses L-methionyl-[protein] + [thioredoxin]-disulfide + H2O = L-methionyl-(R)-S-oxide-[protein] + [thioredoxin]-dithiol. It catalyses the reaction [thioredoxin]-disulfide + L-methionine + H2O = L-methionine (R)-S-oxide + [thioredoxin]-dithiol. In terms of biological role, methionine-sulfoxide reductase that specifically reduces methionine (R)-sulfoxide back to methionine. While in many cases, methionine oxidation is the result of random oxidation following oxidative stress, methionine oxidation is also a post-translational modification that takes place on specific residue. Upon oxidative stress, may play a role in the preservation of mitochondrial integrity by decreasing the intracellular reactive oxygen species build-up through its scavenging role, hence contributing to cell survival and protein maintenance. The sequence is that of Methionine-R-sulfoxide reductase B2, mitochondrial (MSRB2) from Homo sapiens (Human).